The following is a 380-amino-acid chain: RNA-binding motif protein, Y chromosome (380 aa).

Positions 8 to 86 constitute an RRM domain; sequence GKIFIGGLNI…KRIKVKQARR (79 aa). Disordered regions lie at residues 82–226 and 279–358; these read KQAR…STSR and HEAP…YSAS. The span at 166–178 shows a compositional bias: polar residues; the sequence is RSATSAQTRSNTG. 2 stretches are compositionally biased toward basic and acidic residues: residues 180–190 and 333–351; these read RGREPHRREIS and IDRE…HSPK.

As to quaternary structure, interacts with SRSF3/SRP20, SRSF9/SRP30, SRSF5/SRP40, and SRSF6/SRP55; this interaction inhibits SRSF family member pre-mRNA splicing. Interacts with splicing factor proteins and KHDRBS3. As to expression, testis-specific.

The protein resides in the nucleus. In terms of biological role, RNA-binding protein involved in pre-mRNA splicing. Required for sperm development. Acts additively with TRA2B to promote exon 7 inclusion of the survival motor neuron SMN. Binds non-specifically to mRNAs. This chain is RNA-binding motif protein, Y chromosome, found in Mus musculus (Mouse).